We begin with the raw amino-acid sequence, 349 residues long: Holliday junction branch migration complex subunit RuvB (349 aa).

The interval 1–186 is large ATPase domain (RuvB-L); it reads MSEDYLDRDV…FGFTAHMDFY (186 aa). Residues leucine 25, arginine 26, glycine 67, lysine 70, threonine 71, serine 72, 133–135, arginine 176, tyrosine 186, and arginine 223 contribute to the ATP site; that span reads EDF. Threonine 71 lines the Mg(2+) pocket. The small ATPAse domain (RuvB-S) stretch occupies residues 187-257; it reads EPTELEGVLA…VAKAALAVYD (71 aa). The segment at 260–349 is head domain (RuvB-H); the sequence is ELGLDRLDRA…GLSQPGLFES (90 aa). Positions 315 and 320 each coordinate DNA.

Belongs to the RuvB family. Homohexamer. Forms an RuvA(8)-RuvB(12)-Holliday junction (HJ) complex. HJ DNA is sandwiched between 2 RuvA tetramers; dsDNA enters through RuvA and exits via RuvB. An RuvB hexamer assembles on each DNA strand where it exits the tetramer. Each RuvB hexamer is contacted by two RuvA subunits (via domain III) on 2 adjacent RuvB subunits; this complex drives branch migration. In the full resolvosome a probable DNA-RuvA(4)-RuvB(12)-RuvC(2) complex forms which resolves the HJ.

It localises to the cytoplasm. It carries out the reaction ATP + H2O = ADP + phosphate + H(+). Functionally, the RuvA-RuvB-RuvC complex processes Holliday junction (HJ) DNA during genetic recombination and DNA repair, while the RuvA-RuvB complex plays an important role in the rescue of blocked DNA replication forks via replication fork reversal (RFR). RuvA specifically binds to HJ cruciform DNA, conferring on it an open structure. The RuvB hexamer acts as an ATP-dependent pump, pulling dsDNA into and through the RuvAB complex. RuvB forms 2 homohexamers on either side of HJ DNA bound by 1 or 2 RuvA tetramers; 4 subunits per hexamer contact DNA at a time. Coordinated motions by a converter formed by DNA-disengaged RuvB subunits stimulates ATP hydrolysis and nucleotide exchange. Immobilization of the converter enables RuvB to convert the ATP-contained energy into a lever motion, pulling 2 nucleotides of DNA out of the RuvA tetramer per ATP hydrolyzed, thus driving DNA branch migration. The RuvB motors rotate together with the DNA substrate, which together with the progressing nucleotide cycle form the mechanistic basis for DNA recombination by continuous HJ branch migration. Branch migration allows RuvC to scan DNA until it finds its consensus sequence, where it cleaves and resolves cruciform DNA. The chain is Holliday junction branch migration complex subunit RuvB from Mycobacterium leprae (strain Br4923).